A 148-amino-acid chain; its full sequence is Putative cyclin-dependent kinase inhibitor SPL2 (148 aa).

Phosphoserine is present on residues S59 and S86.

The protein localises to the cytoplasmic granule. It is found in the cytoplasm. Functionally, putative cyclin-dependent kinase (CDK) inhibitor necessary and sufficient for PHO pathway-dependent down-regulation of low-affinity phosphate transport. The protein is Putative cyclin-dependent kinase inhibitor SPL2 (SPL2) of Saccharomyces cerevisiae (strain YJM789) (Baker's yeast).